The following is a 214-amino-acid chain: Probable transaldolase (214 aa).

K83 acts as the Schiff-base intermediate with substrate in catalysis.

Belongs to the transaldolase family. Type 3B subfamily.

The protein localises to the cytoplasm. The catalysed reaction is D-sedoheptulose 7-phosphate + D-glyceraldehyde 3-phosphate = D-erythrose 4-phosphate + beta-D-fructose 6-phosphate. It functions in the pathway carbohydrate degradation; pentose phosphate pathway; D-glyceraldehyde 3-phosphate and beta-D-fructose 6-phosphate from D-ribose 5-phosphate and D-xylulose 5-phosphate (non-oxidative stage): step 2/3. Its function is as follows. Transaldolase is important for the balance of metabolites in the pentose-phosphate pathway. The sequence is that of Probable transaldolase from Clostridium tetani (strain Massachusetts / E88).